The chain runs to 448 residues: Na(+)-translocating NADH-quinone reductase subunit A (448 aa).

The protein belongs to the NqrA family. In terms of assembly, composed of six subunits; NqrA, NqrB, NqrC, NqrD, NqrE and NqrF.

The enzyme catalyses a ubiquinone + n Na(+)(in) + NADH + H(+) = a ubiquinol + n Na(+)(out) + NAD(+). Functionally, NQR complex catalyzes the reduction of ubiquinone-1 to ubiquinol by two successive reactions, coupled with the transport of Na(+) ions from the cytoplasm to the periplasm. NqrA to NqrE are probably involved in the second step, the conversion of ubisemiquinone to ubiquinol. The polypeptide is Na(+)-translocating NADH-quinone reductase subunit A (Alcanivorax borkumensis (strain ATCC 700651 / DSM 11573 / NCIMB 13689 / SK2)).